We begin with the raw amino-acid sequence, 574 residues long: Septation ring formation regulator EzrA (574 aa).

Over 1 to 7 (MSSGIIL) the chain is Extracellular. Residues 8–26 (LIVAIVLLVIIAYLVGVII) form a helical membrane-spanning segment. Residues 27–574 (RKRNDSLITS…YEKTREHIRF (548 aa)) lie on the Cytoplasmic side of the membrane. Coiled coils occupy residues 102-141 (NFIR…EEKN), 274-350 (ELVT…ETES), and 459-520 (QLEA…SFEA).

This sequence belongs to the EzrA family.

The protein localises to the cell membrane. Its function is as follows. Negative regulator of FtsZ ring formation; modulates the frequency and position of FtsZ ring formation. Inhibits FtsZ ring formation at polar sites. Interacts either with FtsZ or with one of its binding partners to promote depolymerization. This is Septation ring formation regulator EzrA from Streptococcus pyogenes serotype M6 (strain ATCC BAA-946 / MGAS10394).